The sequence spans 232 residues: Large ribosomal subunit protein uL1 (232 aa).

Belongs to the universal ribosomal protein uL1 family. In terms of assembly, part of the 50S ribosomal subunit.

Functionally, binds directly to 23S rRNA. The L1 stalk is quite mobile in the ribosome, and is involved in E site tRNA release. In terms of biological role, protein L1 is also a translational repressor protein, it controls the translation of the L11 operon by binding to its mRNA. The polypeptide is Large ribosomal subunit protein uL1 (Chlamydia caviae (strain ATCC VR-813 / DSM 19441 / 03DC25 / GPIC) (Chlamydophila caviae)).